We begin with the raw amino-acid sequence, 464 residues long: Protein FAM90A12 (464 aa).

Disordered regions lie at residues 1–42 (MMAR…DPRL), 70–389 (PATL…HDGA), and 411–437 (APSFHSPEKPGAFLAQSPHVSEKSEAP). Composition is skewed to basic and acidic residues over residues 74–89 (GKKEGKENLKPWKPRA) and 97–114 (NKDKGEKEERPRQQDPQR). Over residues 180–197 (LASLSPLRKASLSSSSSL) the composition is skewed to low complexity.

This sequence belongs to the FAM90 family.

The polypeptide is Protein FAM90A12 (Homo sapiens (Human)).